The chain runs to 282 residues: E3 ubiquitin-protein ligase SIAH1 (282 aa).

Residues 1–17 (MSRQTATALPTGTSKCP) show a composition bias toward polar residues. The interval 1-22 (MSRQTATALPTGTSKCPPSQRV) is disordered. Serine 19 bears the Phosphoserine; by ATM and ATR mark. The RING-type zinc-finger motif lies at 41-76 (CPVCFDYVLPPILQCQSGHLVCSNCRPKLTCCPTCR). The SBD stretch occupies residues 90–282 (VANSVLFPCK…LGINVTISMC (193 aa)). The segment at 93–153 (SVLFPCKYAS…VMPHLMHQHK (61 aa)) adopts an SIAH-type zinc-finger fold. Residues cysteine 98, cysteine 105, histidine 117, cysteine 121, cysteine 128, cysteine 135, histidine 147, and histidine 152 each contribute to the Zn(2+) site.

Belongs to the SINA (Seven in absentia) family. In terms of assembly, homodimer. Component of some large E3 complex composed of UBE2D1, SIAH1, CACYBP/SIP, SKP1, APC and TBL1X. Interacts with UBE2I. Interacts with alpha-tubulin. Interacts with PEG10, which may inhibit its activity. Interacts with PEG3 and HIPK2. Interacts with group 1 glutamate receptors GRM1 and GRM5. Interacts with DAB1, which may inhibit its activity. Interacts with UBE2E2. Interacts with SNCAIP. Interacts with HIPK2; the interaction is promoted by DAZAP2 and results in SIAH1-mediated ubiquitination and subsequent proteasomal degradation of HIPK2. Interacts with DAZAP2; the interaction is decreased following phosphorylation of DAZAP2 by HIPK2. Interacts with GAPDH; leading to stabilize SIAH1. Interacts with Bassoon/BSN and Piccolo/PLCO; these interactions negatively regulate SIAH1 E3 ligase activity. Interacts with DCC. Interacts with AXIN1; catalyzes AXIN1 ubiquitination and subsequent proteasome-mediated ubiquitin-dependent degradation. Post-translationally, phosphorylated on Ser-19 by ATM and ATR. This phosphorylation disrupts SIAH1 interaction with HIPK2, and subsequent proteasomal degradation of HIPK2.

The protein resides in the cytoplasm. The protein localises to the nucleus. It catalyses the reaction S-ubiquitinyl-[E2 ubiquitin-conjugating enzyme]-L-cysteine + [acceptor protein]-L-lysine = [E2 ubiquitin-conjugating enzyme]-L-cysteine + N(6)-ubiquitinyl-[acceptor protein]-L-lysine.. It participates in protein modification; protein ubiquitination. Functionally, E3 ubiquitin-protein ligase that mediates ubiquitination and subsequent proteasomal degradation of target proteins. E3 ubiquitin ligases accept ubiquitin from an E2 ubiquitin-conjugating enzyme in the form of a thioester and then directly transfers the ubiquitin to targeted substrates. Mediates E3 ubiquitin ligase activity either through direct binding to substrates or by functioning as the essential RING domain subunit of larger E3 complexes. Triggers the ubiquitin-mediated degradation of many substrates, including proteins involved in transcription regulation (ELL2, MYB, POU2AF1, PML and RBBP8), a cell surface receptor (DCC), cytoplasmic signal transduction molecules (KLF10/TIEG1 and NUMB), an antiapoptotic protein (BAG1), a microtubule motor protein (KIF22), a protein involved in synaptic vesicle function in neurons (SYP), a structural protein (CTNNB1) and SNCAIP. Confers constitutive instability to HIPK2 through proteasomal degradation. It is thereby involved in many cellular processes such as apoptosis, tumor suppression, cell cycle, axon guidance, transcription, spermatogenesis and TNF-alpha signaling. Has some overlapping function with SIAH2. Induces apoptosis in cooperation with PEG3. Upon nitric oxid (NO) generation that follows apoptotic stimulation, interacts with S-nitrosylated GAPDH, mediating the translocation of GAPDH to the nucleus. GAPDH acts as a stabilizer of SIAH1, facilitating the degradation of nuclear proteins. Mediates ubiquitination and degradation of EGLN2 and EGLN3 in response to the unfolded protein response (UPR), leading to their degradation and subsequent stabilization of ATF4. Also part of the Wnt signaling pathway in which it mediates the Wnt-induced ubiquitin-mediated proteasomal degradation of AXIN1. This is E3 ubiquitin-protein ligase SIAH1 (Siah1) from Rattus norvegicus (Rat).